Here is a 581-residue protein sequence, read N- to C-terminus: 2-hydroxyacyl-CoA lyase 1 (581 aa).

Phosphoserine is present on residues serine 4 and serine 6. Glutamate 63 serves as a coordination point for thiamine diphosphate. 3 positions are modified to N6-succinyllysine: lysine 354, lysine 361, and lysine 368. The thiamine pyrophosphate binding stretch occupies residues 404 to 487 (TMDIGRTMLQ…IILLVVNNNG (84 aa)). Mg(2+) is bound by residues aspartate 458 and asparagine 485. The Microbody targeting signal signature appears at 579–581 (SNM).

The protein belongs to the TPP enzyme family. As to quaternary structure, homotetramer. The cofactor is Mg(2+). It depends on thiamine diphosphate as a cofactor. As to expression, predominanly expressed in liver.

It localises to the peroxisome. It catalyses the reaction a 2-hydroxy-3-methyl fatty acyl-CoA = a 2-methyl-branched fatty aldehyde + formyl-CoA. The catalysed reaction is an (R)-2-hydroxy-long-chain-fatty acyl-CoA = a long-chain fatty aldehyde + formyl-CoA. It carries out the reaction 2-hydroxy-3-methylhexadecanoyl-CoA = 2-methylpentadecanal + formyl-CoA. The enzyme catalyses 2-hydroxyoctadecanoyl-CoA = heptadecanal + formyl-CoA. It catalyses the reaction 2-hydroxyphytanoyl-CoA = 2,6,10,14-tetramethylpentadecanal + formyl-CoA. It participates in lipid metabolism; fatty acid metabolism. Peroxisomal 2-OH acyl-CoA lyase involved in the cleavage (C1 removal) reaction in the fatty acid alpha-oxydation in a thiamine pyrophosphate (TPP)-dependent manner. Involved in the degradation of 3-methyl-branched fatty acids like phytanic acid and the shortening of 2-hydroxy long-chain fatty acids. Plays a significant role in the biosynthesis of heptadecanal in the liver. This is 2-hydroxyacyl-CoA lyase 1 (Hacl1) from Mus musculus (Mouse).